The primary structure comprises 907 residues: Envelope glycoprotein B (907 aa).

The signal sequence occupies residues 1-22; that stretch reads MESRIWCLVVCVNLCIVCLGAA. The Virion surface portion of the chain corresponds to 23-751; the sequence is VSSSSTRGTS…EGVATFLKNP (729 aa). A disordered region spans residues 29 to 62; that stretch reads RGTSATHSHHSSHTTSAAHSRSGSVSQRVTSSQT. A compositionally biased stretch (low complexity) spans 41–62; the sequence is HTTSAAHSRSGSVSQRVTSSQT. N-linked (GlcNAc...) asparagine; by host glycosylation is found at Asn68, Asn73, and Asn85. Disulfide bonds link Cys94–Cys551, Cys111–Cys507, Cys185–Cys250, and Cys344–Cys391. An involved in fusion and/or binding to host membrane region spans residues 152 to 158; that stretch reads SYAYIHT. Asn208 carries N-linked (GlcNAc...) asparagine; by host glycosylation. The interval 237–244 is involved in fusion and/or binding to host membrane; sequence GSTWLYRE. 14 N-linked (GlcNAc...) asparagine; by host glycosylation sites follow: Asn281, Asn286, Asn302, Asn341, Asn383, Asn405, Asn409, Asn417, Asn447, Asn452, Asn456, Asn466, Asn555, and Asn586. A disulfide bridge links Cys574 with Cys611. 2 hydrophobic membrane proximal region regions span residues 697–749 and 708–748; these read VEDK…TFLK and YLKG…ATFL. The chain crosses the membrane as a helical span at residues 752–772; that stretch reads FGAFTIILVAIAVVIIIYLIY. The Intravirion segment spans residues 773-907; sequence TRQRRLCMQP…LKDSDEEENV (135 aa). Polar residues-rich tracts occupy residues 798–810 and 860–877; these read VTSGNTKDTSLQA and RAQQNGTDSLDGQTGTQD. Disordered regions lie at residues 798–838 and 860–907; these read VTSG…TAAP and RAQQ…EENV. Residues 878–887 are compositionally biased toward basic and acidic residues; sequence KGQKPNLLDR. The Internalization motif signature appears at 895-898; that stretch reads YRHL.

Belongs to the herpesviridae glycoprotein B family. Homotrimer; disulfide-linked. Binds to heparan sulfate proteoglycans. Interacts with gH/gL heterodimer. Interacts with host C-type lectin CD209/DC-SIGN. Interacts with host ITGB1, EGFR, and PDGFRA. A proteolytic cleavage by host furin generates two subunits that remain linked by disulfide bonds.

The protein resides in the virion membrane. Its subcellular location is the host cell membrane. The protein localises to the host endosome membrane. It is found in the host Golgi apparatus membrane. Envelope glycoprotein that plays a role in host cell entry, cell to-cell virus transmission, and fusion of infected cells. May be involved in the initial attachment via binding to heparan sulfate together with the gM/gN complex that binds heparin with higher affinity. Interacts with host integrin ITGB1, PDGFRA and EGFR that likely serve as postattachment entry receptors. Also participates in the fusion of viral and cellular membranes leading to virus entry into the host cell. Membrane fusion is mediated by the fusion machinery composed at least of gB and the heterodimer gH/gL. In Homo sapiens (Human), this protein is Envelope glycoprotein B.